The primary structure comprises 133 residues: Helix-loop-helix protein 1 (133 aa).

The tract at residues 1 to 79 is disordered; that stretch reads MMLNSDTMEL…RRATAKYRTA (79 aa). Gly residues predominate over residues 25-45; sequence DCGGGAGPDGAGPGGPGGGQA. Residues 52-65 show a composition bias toward basic and acidic residues; it reads EPGRKDLQHLSREE. Over residues 66 to 79 the composition is skewed to basic residues; it reads RRRRRRATAKYRTA. The bHLH domain occupies 75-127; the sequence is KYRTAHATRERIRVEAFNLAFAELRKLLPTLPPDKKLSKIEILRLAICYISYL.

As to quaternary structure, efficient DNA binding requires dimerization with another bHLH protein.

Its subcellular location is the nucleus. In terms of biological role, may serve as DNA-binding protein and may be involved in the control of cell-type determination, possibly within the developing nervous system. The chain is Helix-loop-helix protein 1 (NHLH1) from Homo sapiens (Human).